Reading from the N-terminus, the 880-residue chain is Endoglucanase E-4 (880 aa).

Positions 1–46 (MSVTEPPPRRRGRHSRARRFLTSLGATAALTAGMLGVPLATGTAHA) are cleaved as a signal peptide. Asp-104 (nucleophile) is an active-site residue. Active-site residues include His-422, His-427, Asp-461, and Glu-470. A CBM3 domain is found at 504 to 652 (PDGPEIFVEA…GVPVWGTAPE (149 aa)). The segment at 647–688 (WGTAPEEGEEPGGGEGPGGGEEPGEDVTPPSAPGSPAVRDVT) is disordered. The 93-residue stretch at 678–770 (APGSPAVRDV…TVSFTTLAEN (93 aa)) folds into the Fibronectin type-III domain. The CBM2 domain maps to 771–880 (GGGPDASCTV…TLNGEPCALA (110 aa)).

Belongs to the glycosyl hydrolase 9 (cellulase E) family.

It carries out the reaction Endohydrolysis of (1-&gt;4)-beta-D-glucosidic linkages in cellulose, lichenin and cereal beta-D-glucans.. The protein operates within glycan metabolism; cellulose degradation. The protein is Endoglucanase E-4 (celD) of Thermobifida fusca (Thermomonospora fusca).